The sequence spans 739 residues: Phosphoribosylformylglycinamidine synthase subunit PurL (739 aa).

His-54 is an active-site residue. Positions 57 and 96 each coordinate ATP. Residue Glu-98 coordinates Mg(2+). Residues 99-102 and Arg-121 contribute to the substrate site; that span reads SHNH. Catalysis depends on His-100, which acts as the Proton acceptor. Asp-122 serves as a coordination point for Mg(2+). Gln-245 provides a ligand contact to substrate. Residue Asp-273 participates in Mg(2+) binding. 317–319 provides a ligand contact to substrate; that stretch reads ESQ. Residues Asp-500 and Gly-537 each contribute to the ATP site. Asn-538 contacts Mg(2+). Ser-540 serves as a coordination point for substrate.

This sequence belongs to the FGAMS family. Monomer. Part of the FGAM synthase complex composed of 1 PurL, 1 PurQ and 2 PurS subunits.

It is found in the cytoplasm. The catalysed reaction is N(2)-formyl-N(1)-(5-phospho-beta-D-ribosyl)glycinamide + L-glutamine + ATP + H2O = 2-formamido-N(1)-(5-O-phospho-beta-D-ribosyl)acetamidine + L-glutamate + ADP + phosphate + H(+). It functions in the pathway purine metabolism; IMP biosynthesis via de novo pathway; 5-amino-1-(5-phospho-D-ribosyl)imidazole from N(2)-formyl-N(1)-(5-phospho-D-ribosyl)glycinamide: step 1/2. Part of the phosphoribosylformylglycinamidine synthase complex involved in the purines biosynthetic pathway. Catalyzes the ATP-dependent conversion of formylglycinamide ribonucleotide (FGAR) and glutamine to yield formylglycinamidine ribonucleotide (FGAM) and glutamate. The FGAM synthase complex is composed of three subunits. PurQ produces an ammonia molecule by converting glutamine to glutamate. PurL transfers the ammonia molecule to FGAR to form FGAM in an ATP-dependent manner. PurS interacts with PurQ and PurL and is thought to assist in the transfer of the ammonia molecule from PurQ to PurL. This chain is Phosphoribosylformylglycinamidine synthase subunit PurL, found in Bacillus cereus (strain Q1).